The primary structure comprises 360 residues: GTPase Obg (360 aa).

The Obg domain maps to 1-156; it reads MFVDSVEIII…KCVRLELKLI (156 aa). Residues 157-360 enclose the OBG-type G domain; the sequence is ADIGLVGFPN…LKFVLLEALP (204 aa). Residues 163–170, 188–192, 210–213, 279–282, and 341–343 contribute to the GTP site; these read GFPNAGKS, FTTLV, DIPG, NKCD, and SAL. Positions 170 and 190 each coordinate Mg(2+).

It belongs to the TRAFAC class OBG-HflX-like GTPase superfamily. OBG GTPase family. In terms of assembly, monomer. Requires Mg(2+) as cofactor.

Its subcellular location is the cytoplasm. Functionally, an essential GTPase which binds GTP, GDP and possibly (p)ppGpp with moderate affinity, with high nucleotide exchange rates and a fairly low GTP hydrolysis rate. Plays a role in control of the cell cycle, stress response, ribosome biogenesis and in those bacteria that undergo differentiation, in morphogenesis control. This chain is GTPase Obg, found in Helicobacter pylori (strain Shi470).